A 495-amino-acid polypeptide reads, in one-letter code: Glycerol kinase (495 aa).

Thr-11 contacts ADP. 3 residues coordinate ATP: Thr-11, Thr-12, and Ser-13. Thr-11 provides a ligand contact to sn-glycerol 3-phosphate. Arg-15 contributes to the ADP binding site. Residues Arg-81, Glu-82, Tyr-133, and Asp-242 each coordinate sn-glycerol 3-phosphate. Arg-81, Glu-82, Tyr-133, Asp-242, and Gln-243 together coordinate glycerol. The ADP site is built by Thr-264 and Gly-307. ATP contacts are provided by Thr-264, Gly-307, Gln-311, and Gly-410. Residue Gly-410 participates in ADP binding.

It belongs to the FGGY kinase family.

It carries out the reaction glycerol + ATP = sn-glycerol 3-phosphate + ADP + H(+). The protein operates within polyol metabolism; glycerol degradation via glycerol kinase pathway; sn-glycerol 3-phosphate from glycerol: step 1/1. Inhibited by fructose 1,6-bisphosphate (FBP). Functionally, key enzyme in the regulation of glycerol uptake and metabolism. Catalyzes the phosphorylation of glycerol to yield sn-glycerol 3-phosphate. In Roseobacter denitrificans (strain ATCC 33942 / OCh 114) (Erythrobacter sp. (strain OCh 114)), this protein is Glycerol kinase.